The following is a 145-amino-acid chain: Hemoglobin subunit beta (145 aa).

The 145-residue stretch at 1-145 folds into the Globin domain; it reads MLTAEEKAAV…VANALAHRYH (145 aa). At Thr11 the chain carries Phosphothreonine. An N6-acetyllysine modification is found at Lys58. His62 provides a ligand contact to heme b. Position 81 is an N6-acetyllysine (Lys81). Position 91 (His91) interacts with heme b. The residue at position 92 (Cys92) is an S-nitrosocysteine.

This sequence belongs to the globin family. Heterotetramer of two alpha chains and two beta chains. As to expression, red blood cells.

In terms of biological role, involved in oxygen transport from the lung to the various peripheral tissues. The protein is Hemoglobin subunit beta (HBB) of Ovis aries musimon (Mouflon).